Consider the following 403-residue polypeptide: Lipid droplet-regulating VLDL assembly factor AUP1 (403 aa).

Residues Met-1 to Ser-21 lie on the Cytoplasmic side of the membrane. The stretch at Leu-22–Ile-42 is an intramembrane region. Topologically, residues Gly-43 to Lys-399 are cytoplasmic. The 43-residue stretch at Thr-286–Val-328 folds into the CUE domain.

It belongs to the AUP1 family.

Its subcellular location is the endoplasmic reticulum membrane. It is found in the lipid droplet. Its function is as follows. Plays a role in the translocation of terminally misfolded proteins from the endoplasmic reticulum lumen to the cytoplasm and their degradation by the proteasome. Plays a role in lipid droplet formation. Induces lipid droplet clustering. This is Lipid droplet-regulating VLDL assembly factor AUP1 from Xenopus tropicalis (Western clawed frog).